A 117-amino-acid chain; its full sequence is Ig heavy chain V region MOO (117 aa).

Positions 1–116 constitute an Ig-like domain; that stretch reads EVKLVESGGD…FGQGTIVTVS (116 aa).

This Canis lupus familiaris (Dog) protein is Ig heavy chain V region MOO.